The primary structure comprises 100 residues: Urease subunit gamma (100 aa).

The protein belongs to the urease gamma subunit family. Heterotrimer of UreA (gamma), UreB (beta) and UreC (alpha) subunits. Three heterotrimers associate to form the active enzyme.

It localises to the cytoplasm. The enzyme catalyses urea + 2 H2O + H(+) = hydrogencarbonate + 2 NH4(+). Its pathway is nitrogen metabolism; urea degradation; CO(2) and NH(3) from urea (urease route): step 1/1. The sequence is that of Urease subunit gamma from Haemophilus influenzae (strain ATCC 51907 / DSM 11121 / KW20 / Rd).